The following is an 863-amino-acid chain: Leucine--tRNA ligase (863 aa).

A 'HIGH' region motif is present at residues 40 to 51 (PYPSGAGLHVGH). The 'KMSKS' region motif lies at 635–639 (KMSKS). Lys638 contacts ATP.

Belongs to the class-I aminoacyl-tRNA synthetase family.

It localises to the cytoplasm. The catalysed reaction is tRNA(Leu) + L-leucine + ATP = L-leucyl-tRNA(Leu) + AMP + diphosphate. The polypeptide is Leucine--tRNA ligase (Leptospira interrogans serogroup Icterohaemorrhagiae serovar Lai (strain 56601)).